Reading from the N-terminus, the 295-residue chain is Small ribosomal subunit protein uS2 (295 aa).

Belongs to the universal ribosomal protein uS2 family.

This chain is Small ribosomal subunit protein uS2, found in Rickettsia canadensis (strain McKiel).